The following is a 43-amino-acid chain: Protein PsbN (43 aa).

The helical transmembrane segment at 5-27 threads the bilayer; the sequence is TLVAIFISCLLVSFTGYAPYTAS.

Belongs to the PsbN family.

The protein resides in the plastid. The protein localises to the chloroplast thylakoid membrane. May play a role in photosystem I and II biogenesis. The protein is Protein PsbN of Anthoceros angustus (Hornwort).